A 319-amino-acid chain; its full sequence is Beta-ketoacyl-[acyl-carrier-protein] synthase III (319 aa).

Active-site residues include cysteine 110 and histidine 246. The segment at 247–251 (QANYR) is ACP-binding. The active site involves asparagine 276.

Belongs to the thiolase-like superfamily. FabH family. Homodimer.

The protein localises to the cytoplasm. The catalysed reaction is malonyl-[ACP] + acetyl-CoA + H(+) = 3-oxobutanoyl-[ACP] + CO2 + CoA. It functions in the pathway lipid metabolism; fatty acid biosynthesis. Its function is as follows. Catalyzes the condensation reaction of fatty acid synthesis by the addition to an acyl acceptor of two carbons from malonyl-ACP. Catalyzes the first condensation reaction which initiates fatty acid synthesis and may therefore play a role in governing the total rate of fatty acid production. Possesses both acetoacetyl-ACP synthase and acetyl transacylase activities. Its substrate specificity determines the biosynthesis of branched-chain and/or straight-chain of fatty acids. This chain is Beta-ketoacyl-[acyl-carrier-protein] synthase III, found in Lactobacillus delbrueckii subsp. bulgaricus (strain ATCC 11842 / DSM 20081 / BCRC 10696 / JCM 1002 / NBRC 13953 / NCIMB 11778 / NCTC 12712 / WDCM 00102 / Lb 14).